Consider the following 2457-residue polypeptide: Highly reducing polyketide synthase ACTTS3 (2457 aa).

The region spanning 5-435 (REPIAVIGSA…GTNAHVILES (431 aa)) is the Ketosynthase family 3 (KS3) domain. Catalysis depends on for beta-ketoacyl synthase activity residues C179, H316, and H356. The segment at 545–856 (RVLGIFTGQG…VMEAVLESSP (312 aa)) is malonyl-CoA:ACP transacylase (MAT) domain. S641 (for malonyltransferase activity) is an active-site residue. The segment at 938–1078 (HELLGRRTAD…GRIIIHLGSG (141 aa)) is N-terminal hotdog fold. Positions 938 to 1244 (HELLGRRTAD…LSLKSVAEPT (307 aa)) are dehydratase (DH) domain. The 309-residue stretch at 938-1246 (HELLGRRTAD…LKSVAEPTEE (309 aa)) folds into the PKS/mFAS DH domain. H970 serves as the catalytic Proton acceptor; for dehydratase activity. Positions 1091 to 1246 (TDLSPVDLDR…LKSVAEPTEE (156 aa)) are C-terminal hotdog fold. Catalysis depends on D1152, which acts as the Proton donor; for dehydratase activity. The tract at residues 1399-1587 (ETMNNCIARA…DVFYDFPDRS (189 aa)) is methyltransferase (CMet) domain. Residues 2085 to 2281 (FLPDKTYLMI…SDRHIENHLR (197 aa)) are ketoreductase (KR) domain. The region spanning 2374-2451 (DVTTVFQQAF…EISIDATKKY (78 aa)) is the Carrier domain. At S2411 the chain carries O-(pantetheine 4'-phosphoryl)serine.

Pantetheine 4'-phosphate is required as a cofactor.

It participates in mycotoxin biosynthesis. Its function is as follows. Highly reducing polyketide synthase; part of the gene clusters that mediate the biosynthesis of the host-selective toxins (HSTs) ACT-toxins responsible for brown spot of tangerine disease by the tangerine pathotype which affects tangerines and mandarins. ACT-toxins consist of three moieties, 9,10-epoxy-8-hydroxy-9-methyl-decatrienoic acid (EDA), valine and a polyketide. ACT-toxin I is toxic to both citrus and pear; toxin II the 5''-deoxy derivative of ACT-toxin I, is highly toxic to pear and slightly toxic to citrus. On cellular level, ACT-toxins affect plasma membrane of susceptible cells and cause a sudden increase in loss of K(+) after a few minutes of toxin treatment. The acyl-CoA ligase ACTT1, the hydrolase ACTT2, the enoyl-CoA hydratases ACTT3 and ACTT6, and the acyl-CoA synthetase ACTT5 are all involved in the biosynthesis of the AK-, AF- and ACT-toxin common 9,10-epoxy-8-hydroxy-9-methyl-decatrienoic acid (EDA) structural moiety. The exact role of each enzyme, and of additional enzymes identified within the AF-toxin clusters have still to be determined. On the other hand, ACTTS1 to ACTTS4 are specific to the tangerine pathotype. The function of ACTTS3 is to elongate the polyketide chain portion of ACT-toxin that is unique to this toxin. The enoyl-reductase ACTTS2 might complement the missing enoyl-reductase (ER) domain in ACTTS3 in the synthesis of the polyketide portion of ACT-toxin. The roles of the nonribosomal peptide synthetases-related proteins ACTTS1 and ACTTS4 have also still not been elucidated. The protein is Highly reducing polyketide synthase ACTTS3 of Alternaria alternata (Alternaria rot fungus).